The following is a 342-amino-acid chain: Holliday junction branch migration complex subunit RuvB (342 aa).

Positions 1–181 (MENRMVTPFD…FGMLCAMEFY (181 aa)) are large ATPase domain (RuvB-L). ATP-binding positions include L20, R21, G62, K65, T66, T67, 128 to 130 (EDY), R171, Y181, and R218. Position 66 (T66) interacts with Mg(2+). A small ATPAse domain (RuvB-S) region spans residues 182–252 (TDEELMEIVV…GAKAALDLLE (71 aa)). The interval 255 to 342 (KEGLDKIDNK…KDNQVSIFNK (88 aa)) is head domain (RuvB-H). R310 and R315 together coordinate DNA.

The protein belongs to the RuvB family. In terms of assembly, homohexamer. Forms an RuvA(8)-RuvB(12)-Holliday junction (HJ) complex. HJ DNA is sandwiched between 2 RuvA tetramers; dsDNA enters through RuvA and exits via RuvB. An RuvB hexamer assembles on each DNA strand where it exits the tetramer. Each RuvB hexamer is contacted by two RuvA subunits (via domain III) on 2 adjacent RuvB subunits; this complex drives branch migration. In the full resolvosome a probable DNA-RuvA(4)-RuvB(12)-RuvC(2) complex forms which resolves the HJ.

The protein resides in the cytoplasm. The enzyme catalyses ATP + H2O = ADP + phosphate + H(+). Functionally, the RuvA-RuvB-RuvC complex processes Holliday junction (HJ) DNA during genetic recombination and DNA repair, while the RuvA-RuvB complex plays an important role in the rescue of blocked DNA replication forks via replication fork reversal (RFR). RuvA specifically binds to HJ cruciform DNA, conferring on it an open structure. The RuvB hexamer acts as an ATP-dependent pump, pulling dsDNA into and through the RuvAB complex. RuvB forms 2 homohexamers on either side of HJ DNA bound by 1 or 2 RuvA tetramers; 4 subunits per hexamer contact DNA at a time. Coordinated motions by a converter formed by DNA-disengaged RuvB subunits stimulates ATP hydrolysis and nucleotide exchange. Immobilization of the converter enables RuvB to convert the ATP-contained energy into a lever motion, pulling 2 nucleotides of DNA out of the RuvA tetramer per ATP hydrolyzed, thus driving DNA branch migration. The RuvB motors rotate together with the DNA substrate, which together with the progressing nucleotide cycle form the mechanistic basis for DNA recombination by continuous HJ branch migration. Branch migration allows RuvC to scan DNA until it finds its consensus sequence, where it cleaves and resolves cruciform DNA. This chain is Holliday junction branch migration complex subunit RuvB, found in Clostridium botulinum (strain 657 / Type Ba4).